The primary structure comprises 242 residues: uncharacterized protein (242 aa).

Disordered regions lie at residues 16–121 (GLYK…GAMA) and 152–178 (PVRPAKLPKGKGRLRRPRQSRFKTQPV). Pro residues-rich tracts occupy residues 50–64 (PRPPTGPPARYPSPA) and 97–113 (EPRPPPESPGAQPPPGP). A compositionally biased stretch (basic residues) spans 157–172 (KLPKGKGRLRRPRQSR). Position 175 is a phosphothreonine (T175). S192, S206, S216, S232, and S238 each carry phosphoserine. A disordered region spans residues 215–242 (QSLSLQREPLGSCKLRNSLDSSDSDSAL). The span at 232–242 (SLDSSDSDSAL) shows a compositional bias: low complexity.

It is found in the cytoplasm. This is an uncharacterized protein from Rattus norvegicus (Rat).